The primary structure comprises 184 residues: MIVAVPNSGASRINQSGVEALREFPNFPIGGILFKDIAPMLAGRGALGEVVSTVASQVSGTEIDAILAVDARGFILGASLADRLGCGFIMVRKPGKLPGDVLSFEYSCEYCSGTLEVTAGLIGDGLRCLIADDLLATGGTARATGNFVKSQGGEIAGYAFILEIEVLKGRRQLDDAPVISAMTC.

Belongs to the purine/pyrimidine phosphoribosyltransferase family. In terms of assembly, homodimer.

It is found in the cytoplasm. It carries out the reaction AMP + diphosphate = 5-phospho-alpha-D-ribose 1-diphosphate + adenine. It functions in the pathway purine metabolism; AMP biosynthesis via salvage pathway; AMP from adenine: step 1/1. Catalyzes a salvage reaction resulting in the formation of AMP, that is energically less costly than de novo synthesis. This Rhizobium etli (strain ATCC 51251 / DSM 11541 / JCM 21823 / NBRC 15573 / CFN 42) protein is Adenine phosphoribosyltransferase 2.